The following is a 392-amino-acid chain: Tryptophan 2,3-dioxygenase (392 aa).

Substrate-binding positions include 57–61 and Arg-128; that span reads FIVTH. His-313 contacts heme. Thr-328 serves as a coordination point for substrate.

Belongs to the tryptophan 2,3-dioxygenase family. In terms of assembly, homotetramer. Dimer of dimers. The cofactor is heme.

The catalysed reaction is L-tryptophan + O2 = N-formyl-L-kynurenine. The protein operates within amino-acid degradation; L-tryptophan degradation via kynurenine pathway; L-kynurenine from L-tryptophan: step 1/2. Its pathway is pigment biosynthesis; ommochrome biosynthesis. In terms of biological role, heme-dependent dioxygenase that catalyzes the oxidative cleavage of the L-tryptophan (L-Trp) pyrrole ring and converts L-tryptophan to N-formyl-L-kynurenine. Catalyzes the oxidative cleavage of the indole moiety. The sequence is that of Tryptophan 2,3-dioxygenase from Anopheles gambiae (African malaria mosquito).